The chain runs to 190 residues: Small ribosomal subunit protein uS5 (190 aa).

The 64-residue stretch at 22–85 folds into the S5 DRBM domain; it reads FVDKLVHINR…DSAKRNLTRV (64 aa).

The protein belongs to the universal ribosomal protein uS5 family. Part of the 30S ribosomal subunit. Contacts proteins S4 and S8.

In terms of biological role, with S4 and S12 plays an important role in translational accuracy. Its function is as follows. Located at the back of the 30S subunit body where it stabilizes the conformation of the head with respect to the body. In Bradyrhizobium sp. (strain BTAi1 / ATCC BAA-1182), this protein is Small ribosomal subunit protein uS5.